Reading from the N-terminus, the 1116-residue chain is DNA-directed RNA polymerase subunit beta (1116 aa).

The segment covering 1070 to 1100 has biased composition (basic and acidic residues); the sequence is KIREEEKEREKEREAREMEDPEKIVSKIDAK. The segment at 1070–1116 is disordered; that stretch reads KIREEEKEREKEREAREMEDPEKIVSKIDAKQKKKYKKTKKQTEKKK. Over residues 1101–1116 the composition is skewed to basic residues; it reads QKKKYKKTKKQTEKKK.

The protein belongs to the RNA polymerase beta chain family. In terms of assembly, in plastids the minimal PEP RNA polymerase catalytic core is composed of four subunits: alpha, beta, beta', and beta''. When a (nuclear-encoded) sigma factor is associated with the core the holoenzyme is formed, which can initiate transcription.

The protein localises to the plastid. The protein resides in the chloroplast. It carries out the reaction RNA(n) + a ribonucleoside 5'-triphosphate = RNA(n+1) + diphosphate. DNA-dependent RNA polymerase catalyzes the transcription of DNA into RNA using the four ribonucleoside triphosphates as substrates. The protein is DNA-directed RNA polymerase subunit beta of Heterosigma akashiwo (Chromophytic alga).